A 625-amino-acid polypeptide reads, in one-letter code: Tyrosine-protein kinase ITK/TSK (625 aa).

One can recognise a PH domain in the interval 4-117; sequence FILLEEQLIK…WVLTLKEETR (114 aa). The segment at 119–155 adopts a Btk-type zinc-finger fold; it reads NNSLVSKYHPNFWMDGRWRCCSQLEKPAVGCAPYDPS. Zn(2+) contacts are provided by His127, Cys138, Cys139, and Cys149. The disordered stretch occupies residues 153-174; it reads DPSKNASKKPLPPTPEDNRRSF. An SH3 domain is found at 177 to 237; that stretch reads PEETLVIALY…PSSYLVEKSP (61 aa). Tyr186 carries the post-translational modification Phosphotyrosine; by autocatalysis. One can recognise an SH2 domain in the interval 245–343; it reads WYNKSISRDK…GLVTRLRYPV (99 aa). Positions 368-620 constitute a Protein kinase domain; sequence LTFVQEIGSG…SQLLSQLAEI (253 aa). Residues 374 to 382 and Lys396 contribute to the ATP site; that span reads IGSGQFGLV. The Proton acceptor role is filled by Asp487. Tyr517 carries the phosphotyrosine; by LCK modification. Ser570 is subject to Phosphoserine.

This sequence belongs to the protein kinase superfamily. Tyr protein kinase family. TEC subfamily. In terms of assembly, homooligomerizes; this association negatively regulates kinase activity. Interacts with PPIA/CYPA; this interaction regulates TCR signal strength via a proline-directed conformational switch in ITK. Interacts with THEMIS. Interacts with FASLG. Interacts with VAV1; this interaction is important for VAV1 localization and TCR-induced actin polarization. Interacts with TBX21. Requires Zn(2+) as cofactor. Post-translationally, phosphorylated at Tyr-517 in the activation loop of the kinase domain by LCK. Subsequent autophosphorylation at Tyr-186 leads to the kinase activation. The autophosphorylated Tyr-186 lies within the substrate binding sequence of the SH3 domain. Ubiquitinated. As to expression, is detected in the thymus, lymph node and very faintly in the spleen, but is not detected in the liver, lung, kidney, heart, brain, intestine or testis. Expressed in T-lymphocytes and mast cells. It may also be expressed in natural killer cells.

The protein resides in the cytoplasm. It localises to the nucleus. The catalysed reaction is L-tyrosyl-[protein] + ATP = O-phospho-L-tyrosyl-[protein] + ADP + H(+). Tyrosine kinase that plays an essential role in regulation of the adaptive immune response. Regulates the development, function and differentiation of conventional T-cells and nonconventional NKT-cells. When antigen presenting cells (APC) activate T-cell receptor (TCR), a series of phosphorylation lead to the recruitment of ITK to the cell membrane, in the vicinity of the stimulated TCR receptor, where it is phosphorylated by LCK. Phosphorylation leads to ITK autophosphorylation and full activation. Once activated, phosphorylates PLCG1, leading to the activation of this lipase and subsequent cleavage of its substrates. In turn, the endoplasmic reticulum releases calcium in the cytoplasm and the nuclear activator of activated T-cells (NFAT) translocates into the nucleus to perform its transcriptional duty. Phosphorylates 2 essential adapter proteins: the linker for activation of T-cells/LAT protein and LCP2. Then, a large number of signaling molecules such as VAV1 are recruited and ultimately lead to lymphokine production, T-cell proliferation and differentiation. Required for TCR-mediated calcium response in gamma-delta T-cells, may also be involved in the modulation of the transcriptomic signature in the Vgamma2-positive subset of immature gamma-delta T-cells. Phosphorylates TBX21 at 'Tyr-525' and mediates its interaction with GATA3. This is Tyrosine-protein kinase ITK/TSK (Itk) from Mus musculus (Mouse).